Reading from the N-terminus, the 163-residue chain is MSKPPRRSPRKPTPASPELQLGHEVVWPTSPDAARLDRVANPQRDTDYLARFTAPEFTSLCPVTGQPDFAHLVIDYAPGAWLLESKSLKLYLASFRSHGAFHEDCTVGIGKRIAAEIKPKWLRIGGYWYPRGGIPIDVFWQTGKLPKGLWVPDQGVRPYRGRG.

Over residues 1–10 (MSKPPRRSPR) the composition is skewed to basic residues. A disordered region spans residues 1–23 (MSKPPRRSPRKPTPASPELQLGH). Cysteine 61 serves as the catalytic Thioimide intermediate. The Proton donor role is filled by aspartate 68. Residues 83-85 (LES) and 102-103 (HE) each bind substrate.

The protein belongs to the GTP cyclohydrolase I family. QueF type 1 subfamily.

The protein localises to the cytoplasm. The catalysed reaction is 7-aminomethyl-7-carbaguanine + 2 NADP(+) = 7-cyano-7-deazaguanine + 2 NADPH + 3 H(+). The protein operates within tRNA modification; tRNA-queuosine biosynthesis. Its function is as follows. Catalyzes the NADPH-dependent reduction of 7-cyano-7-deazaguanine (preQ0) to 7-aminomethyl-7-deazaguanine (preQ1). This is NADPH-dependent 7-cyano-7-deazaguanine reductase from Rhodopseudomonas palustris (strain BisA53).